A 187-amino-acid chain; its full sequence is Transcriptional regulator VspR (187 aa).

Its function is as follows. Represses the transcription of several genes encoded within the Vibrio 7th pandemic island-1 (VSP-1), including dncV, VC_0176, VC_0178 and VC_0180. This Vibrio cholerae serotype O1 (strain ATCC 39315 / El Tor Inaba N16961) protein is Transcriptional regulator VspR (vspR).